We begin with the raw amino-acid sequence, 376 residues long: Serine-arginine protein 55 (376 aa).

Residues 4–74 (SRVYVGGLPY…ERVVVEPARG (71 aa)) enclose the RRM 1 domain. The tract at residues 73–114 (RGTARGSNRDRYDDRYGGRRGGGGGRYNEKNKNSRSSSRYGP) is disordered. Positions 79–89 (SNRDRYDDRYG) are enriched in basic and acidic residues. The region spanning 120–193 (YRLIVENLSS…RRIHLVEDRR (74 aa)) is the RRM 2 domain. Phosphoserine is present on Ser-165. Positions 185–194 (RIHLVEDRRG) are enriched in basic and acidic residues. The interval 185 to 376 (RIHLVEDRRG…PDRNNESMDD (192 aa)) is disordered. Over residues 196–205 (RSGGGGGSGR) the composition is skewed to gly residues. Basic residues-rich tracts occupy residues 215–263 (SRSR…SRSN) and 271–283 (SKSK…RSRS). The span at 284–304 (PKRERDSRSRSRSVSKRESRS) shows a compositional bias: basic and acidic residues.

This sequence belongs to the splicing factor SR family. In terms of processing, extensively phosphorylated on serine residues in the RS domain.

The protein localises to the nucleus. Its function is as follows. Essential for development. May have a critical role in splicing or in controlling alternative splice site use of at least some pre-mRNA in vivo. Not required for all splicing. May play a general role in the condensation or decondensation of chromatin. The chain is Serine-arginine protein 55 (B52) from Drosophila melanogaster (Fruit fly).